We begin with the raw amino-acid sequence, 899 residues long: Protein translocase subunit SecA (899 aa).

ATP is bound by residues Gln-87, 105–109 (GEGKT), and Asp-516. Zn(2+) is bound by residues Cys-884, Cys-886, Cys-895, and His-896.

The protein belongs to the SecA family. Monomer and homodimer. Part of the essential Sec protein translocation apparatus which comprises SecA, SecYEG and auxiliary proteins SecDF. Other proteins may also be involved. Zn(2+) is required as a cofactor.

The protein resides in the cell inner membrane. Its subcellular location is the cytoplasm. The enzyme catalyses ATP + H2O + cellular proteinSide 1 = ADP + phosphate + cellular proteinSide 2.. Functionally, part of the Sec protein translocase complex. Interacts with the SecYEG preprotein conducting channel. Has a central role in coupling the hydrolysis of ATP to the transfer of proteins into and across the cell membrane, serving as an ATP-driven molecular motor driving the stepwise translocation of polypeptide chains across the membrane. The chain is Protein translocase subunit SecA from Borreliella burgdorferi (strain ATCC 35210 / DSM 4680 / CIP 102532 / B31) (Borrelia burgdorferi).